The primary structure comprises 385 residues: Methylthioribose-1-phosphate isomerase (385 aa).

Catalysis depends on Asp256, which acts as the Proton donor.

This sequence belongs to the eIF-2B alpha/beta/delta subunits family. MtnA subfamily.

Its subcellular location is the cytoplasm. The protein localises to the nucleus. It carries out the reaction 5-(methylsulfanyl)-alpha-D-ribose 1-phosphate = 5-(methylsulfanyl)-D-ribulose 1-phosphate. It functions in the pathway amino-acid biosynthesis; L-methionine biosynthesis via salvage pathway; L-methionine from S-methyl-5-thio-alpha-D-ribose 1-phosphate: step 1/6. Catalyzes the interconversion of methylthioribose-1-phosphate (MTR-1-P) into methylthioribulose-1-phosphate (MTRu-1-P). The chain is Methylthioribose-1-phosphate isomerase from Arthroderma otae (strain ATCC MYA-4605 / CBS 113480) (Microsporum canis).